The chain runs to 202 residues: Syndecan-4 (202 aa).

The N-terminal stretch at 1–23 (MAPVCLFAPLLLLLLGGFPVAPG) is a signal peptide. The Extracellular segment spans residues 24–149 (ESIRETEVID…QGSNIFERTE (126 aa)). Disordered regions lie at residues 42–76 (YFSGALPDDEDAGGLEQDSDFELSGSGDLDDTEEP) and 89–138 (LDNH…MSST). Residue Ser44 is glycosylated (O-linked (Xyl...) (glycosaminoglycan) serine). Positions 48–62 (PDDEDAGGLEQDSDF) are enriched in acidic residues. Residues Ser65 and Ser67 are each glycosylated (O-linked (Xyl...) (glycosaminoglycan) serine). The segment covering 105-121 (SEPKELEENEVIPKRVP) has biased composition (basic and acidic residues). Residues 150–174 (VLAALIVGGVVGILFAVFLILLLVY) form a helical membrane-spanning segment. Over 175–202 (RMKKKDEGSYDLGKKPIYKKAPTNEFYA) the chain is Cytoplasmic.

It belongs to the syndecan proteoglycan family. As to quaternary structure, homodimer. Interacts with CDCP1 and SDCBP. Interacts (via its cytoplasmic domain) with GIPC (via its PDZ domain). Interacts (via its cytoplasmic domain) with NUDT16L1. Interacts with DNM2; this interaction is markedly enhanced at focal ahesion site upon induction of focal adhesions and stress-fiber formation. Shedding is enhanced by a number of factors such as heparanase, thrombin or EGF. Also by stress and wound healing. PMA-mediated shedding is inhibited by TIMP3. In terms of processing, O-glycosylated; contains both chondroitin sulfate and heparan sulfate. Ser-44, Ser-65 and Ser-67 can all be modified by either chondroitin sulfate or heparan sulfate, and the protein exists in forms that contain only chondroitin sulfate, only heparan sulfate and both chondroitin sulfate and heparan sulfate.

The protein resides in the membrane. The protein localises to the secreted. Its function is as follows. Cell surface proteoglycan which regulates exosome biogenesis in concert with SDCBP and PDCD6IP. In Rattus norvegicus (Rat), this protein is Syndecan-4.